Reading from the N-terminus, the 242-residue chain is Uridylate kinase (242 aa).

8–11 provides a ligand contact to ATP; sequence KFSG. Position 50 (G50) interacts with UMP. ATP contacts are provided by G51 and R55. Residues D71 and 132-139 each bind UMP; that span reads TGNPFFTT. Positions 159, 165, and 168 each coordinate ATP.

Belongs to the UMP kinase family. As to quaternary structure, homohexamer.

It localises to the cytoplasm. The catalysed reaction is UMP + ATP = UDP + ADP. It functions in the pathway pyrimidine metabolism; CTP biosynthesis via de novo pathway; UDP from UMP (UMPK route): step 1/1. Its activity is regulated as follows. Inhibited by UTP. Functionally, catalyzes the reversible phosphorylation of UMP to UDP. This Nitratiruptor sp. (strain SB155-2) protein is Uridylate kinase.